A 578-amino-acid polypeptide reads, in one-letter code: Suppressor of smlA (578 aa).

Functionally, involved in regulation of group size of aggregation streams. This Dictyostelium discoideum (Social amoeba) protein is Suppressor of smlA (sslA1).